We begin with the raw amino-acid sequence, 980 residues long: MGAMDLVFKLIFGSKEQNDAKILKPIAEKTLTFEEEIKKLSNEELTNKTKEFRERVEKYIGCKTEELDLSKEENKKKLQNILDEILPEAFAVVREASIRTTGMRHFDVQVMGGAVLHQGRIAEMKTGEGKTLVATLAVYLNALTGLGVHVVTVNDYLAKRDAEWMTPIYSMLGISVGILDNTRPHSPERRAVYNCDVVYGTNNEFGFDYLRDNMVTRKEDKVQRKFYFAIVDEVDSILIDEARTPLIISGPAEKNIKMYYEIDRIIPMLKQAEVDERMREVAGTGDYVLDEKDKNVYLTEEGVHKVEKLLNVENLYGAQSSTIVHHVNQALKAHKVFKKDVDYMVTDGEVLIVDEFTGRVLEGRRYSDGLHQAIEAKEKVAIQNESQTYATITFQNYFRMYPKLSGMTGTAETEAEEFYKIYKLDVAVIPTNKPIARQDLSDRIYRTRKAKFEALAKYIKELQDAGKPALVGTVSVEMNEELSKVFKRHKINHEVLNAKNHSREAAIIAQAGEPGAVTLATNMAGRGTDIVLGGNPVAKGVAEIEQILVLMRDKAFKERDPYKKEELTKKIKSIDLYKEAFVRSVISGKIEEAKELAQKNNADEMIEKIDRIIQINEKAKVDKERVLAAGGLHVIGSERHEARRIDNQLRGRSGRQGDPGLSVFFLSLEDDLMRLFGGERVSKMMLAMGMGEEEELGHKWLNKSIENAQRKVEGRNFDIRKHLLEYDDVMNQQRMAVYGERDYILYSDDISPRVEEIISEVTEETIEDISGNKKNVDALEVTKWLNSYLIGIDEDAANKAVEGGVDNAVKNLTNLLLEAYRKKASEIDEKIFREVEKNIFLSIIDNRWKDHLFAMDSLREGIGLRGYAEKNPLTEYKLEGYKMFMATMNVIHNELVNLIMRVRIIPNSFDTIERESAFDGGVEEKSSASAMNGGNAQAIQSKVKNAQPNVKMAQKIGRNDPCPCGSGKKYKHCHGKDNPQ.

ATP contacts are provided by residues Gln-109, 127-131 (GEGKT), and Asp-529. Residues 954–980 (QKIGRNDPCPCGSGKKYKHCHGKDNPQ) are disordered. 4 residues coordinate Zn(2+): Cys-962, Cys-964, Cys-973, and His-974.

It belongs to the SecA family. In terms of assembly, monomer and homodimer. Part of the essential Sec protein translocation apparatus which comprises SecA, SecYEG and auxiliary proteins SecDF. Other proteins may also be involved. It depends on Zn(2+) as a cofactor.

It localises to the cell inner membrane. The protein resides in the cytoplasm. It catalyses the reaction ATP + H2O + cellular proteinSide 1 = ADP + phosphate + cellular proteinSide 2.. Its function is as follows. Part of the Sec protein translocase complex. Interacts with the SecYEG preprotein conducting channel. Has a central role in coupling the hydrolysis of ATP to the transfer of proteins into and across the cell membrane, serving as an ATP-driven molecular motor driving the stepwise translocation of polypeptide chains across the membrane. The protein is Protein translocase subunit SecA of Brachyspira hyodysenteriae (strain ATCC 49526 / WA1).